Reading from the N-terminus, the 271-residue chain is Elongation factor Ts (271 aa).

Residues 76–79 are involved in Mg(2+) ion dislocation from EF-Tu; it reads TDFV.

Belongs to the EF-Ts family.

It is found in the cytoplasm. In terms of biological role, associates with the EF-Tu.GDP complex and induces the exchange of GDP to GTP. It remains bound to the aminoacyl-tRNA.EF-Tu.GTP complex up to the GTP hydrolysis stage on the ribosome. This is Elongation factor Ts from Saccharopolyspora erythraea (strain ATCC 11635 / DSM 40517 / JCM 4748 / NBRC 13426 / NCIMB 8594 / NRRL 2338).